A 1077-amino-acid polypeptide reads, in one-letter code: MEPFVVKENIIASASSPMKKRRIDHTESADGSAINASNSSSIGLNNSIGGNDTVMSMAEFGNDNSNNQEIDEDLHSRQLAVYGRETMRKLFASNVLISGMQGLGVEIAKNIILAGVKSVTLHDENVVELWDLSSNFVFTEEDIGKNRALASVHKLQELNNAVAVSTLTGKLTKEQLSDFQVVVFVDISFEKATEIDDYCHSHQPPIAFIKADVRGLFGSLFCDFGPHFTVLDVDGEEPHSGIIASVSNENPGFVSCVDDERLEFEDGNLVVFSEVEGMTELNDGKPRKIKNVKPFSFTLEEDTSSYGQYMKGGIVTQVKQPKVLNFKPLREALKDPGDFLLSDFSKFDRPPLLHLAFQALDRFSSQAGRFPFAGSEEDAQKLVEIAVDINEGLGDARLEDVNSKLLRHLAFGSRAVLNPMAAMFGGIVGQEVVKACSGKFHPIFQFFYFDSVESLPKEPLDASEFRPQNSRYDAQISVFGSTLQKKLEDARVFVVGAGALGCEFLKNLALMGVSCGTQGKLTVTDDDVIEKSNLSRQFLFRDWNIGQAKSTVAATAAAGINSRLNIDALQNRVGPETENVFDDSFWENLTVVVNALDNVTARLYVDSRCVYFQKPLLESGTLGAKCNTQMVIPHLTENYGASRDPPEKQAPMCTVHSFPHNIDHCLTWARSEFEGLLEKTPAEVNAYLSDPVEYMKAMRTAGDAQARDTLGRVVECLEKEKCNSFQDCITWARLRFEDYFANRVKQLCYTFPEDAATSTGAPFWSAPKRFPRPLQFSSTDLSHINFVMAASILRAETFGIPTPEWAKTRAGLAEAVERVIVPDFEPKKDATIVTDEKATTLSTASVDDAAVIDELNAKLVRCRMSLQPEFRMKAIQFEKDDDTNYHMDMIAGLANMRARNYSVPEVDKLKAKFIAGRIIPAIATSTAMATGFVCLEMYKVLDGSHKVEDYRNTFANLALPLFSMAEPVPPKVVKHQDQSWTVWDRWVMRGNPTLRELLDWLKEKGLNAYSISCGSSLLYNSMFSRHKERMNRRVVDLARDVAGVELPAYRRHVDVVVACEDDNDADVDIPLVSVYFA.

Residues serine 16–alanine 36 form a disordered region. ATP-binding positions include alanine 499, aspartate 525, arginine 536, lysine 549, and aspartate 597–asparagine 598. Residue cysteine 653 is the Glycyl thioester intermediate of the active site.

The protein belongs to the ubiquitin-activating E1 family. Monomer. As to expression, expressed in leaves, flowers, roots and stems. Detected in germinating seeds, cotyledons, hypocotyls, vascular tissues, anthers, filaments, pollen, style, stigma, sepals, petals, ovary, developing ovules, funiculi and silique walls.

It catalyses the reaction ATP + ubiquitin + [E1 ubiquitin-activating enzyme]-L-cysteine = AMP + diphosphate + S-ubiquitinyl-[E1 ubiquitin-activating enzyme]-L-cysteine.. The protein operates within protein modification; protein ubiquitination. Its function is as follows. Activates ubiquitin by first adenylating its C-terminal glycine residue with ATP, and thereafter linking this residue to the side chain of a cysteine residue in E1, yielding a ubiquitin-E1 thioester and free AMP. The protein is Ubiquitin-activating enzyme E1 2 (UBA2) of Arabidopsis thaliana (Mouse-ear cress).